The following is a 417-amino-acid chain: MRSLLLGTLCLLAVALAAEVKKPLEAAAPGTAEKLSSKATTLAERSTGLAFSLYQAMAKDQAVENILLSPLVVASSLGLVSLGGKATTASQAKAVLSAEKLRDEEVHTGLGELLRSLSNSTARNVTWKLGSRLYGPSSVSFADDFVRSSKQHYNCEHSKINFRDKRSALQSINEWASQTTDGKLPEVTKDVERTDGALLVNAMFFKPHWDEKFHHKMVDNRGFMVTRSYTVGVTMMHRTGLYNYYDDEKEKLQMVEMPLAHKLSSLIILMPHHVEPLERLEKLLTKEQLKAWMGKMQKKAVAISLPKGVVEVTHDLQKHLAGLGLTEAIDKNKADLSRMSGKKDLYLASVFHATAFEWDTEGNPFDQDIYGREELRSPKLFYADHPFIFLVRDNQSGSLLFIGRLVRPKGDKMRDEL.

A signal peptide spans 1–17 (MRSLLLGTLCLLAVALA). Lysine 93 bears the N6-succinyllysine mark. 2 N-linked (GlcNAc...) asparagine glycosylation sites follow: asparagine 119 and asparagine 124. Phosphoserine is present on serine 140. Lysine 206 carries the N6-acetyllysine modification. The residue at position 295 (lysine 295) is an N6-succinyllysine. Position 318 is an N6-acetyllysine (lysine 318). An N-linked (GlcNAc...) asparagine glycan is attached at asparagine 394. The short motif at 414 to 417 (RDEL) is the Prevents secretion from ER element.

The protein belongs to the serpin family.

Its subcellular location is the endoplasmic reticulum lumen. Functionally, binds specifically to collagen. Could be involved as a chaperone in the biosynthetic pathway of collagen. The sequence is that of Serpin H1 (Serpinh1) from Mus musculus (Mouse).